The following is a 467-amino-acid chain: ATP synthase subunit beta (467 aa).

Position 150 to 157 (150 to 157) interacts with ATP; sequence GGAGVGKT.

Belongs to the ATPase alpha/beta chains family. In terms of assembly, F-type ATPases have 2 components, CF(1) - the catalytic core - and CF(0) - the membrane proton channel. CF(1) has five subunits: alpha(3), beta(3), gamma(1), delta(1), epsilon(1). CF(0) has three main subunits: a(1), b(2) and c(9-12). The alpha and beta chains form an alternating ring which encloses part of the gamma chain. CF(1) is attached to CF(0) by a central stalk formed by the gamma and epsilon chains, while a peripheral stalk is formed by the delta and b chains.

The protein localises to the cell inner membrane. The catalysed reaction is ATP + H2O + 4 H(+)(in) = ADP + phosphate + 5 H(+)(out). Produces ATP from ADP in the presence of a proton gradient across the membrane. The catalytic sites are hosted primarily by the beta subunits. This is ATP synthase subunit beta from Vibrio alginolyticus.